Reading from the N-terminus, the 405-residue chain is Histidine decarboxylase (405 aa).

His121 provides a ligand contact to substrate. Lys234 carries the post-translational modification N6-(pyridoxal phosphate)lysine.

It belongs to the group II decarboxylase family. Homotetramer. Pyridoxal 5'-phosphate is required as a cofactor.

The catalysed reaction is L-histidine + H(+) = histamine + CO2. It functions in the pathway siderophore biosynthesis; pseudomonine biosynthesis. This chain is Histidine decarboxylase, found in Pseudomonas fluorescens.